Here is a 197-residue protein sequence, read N- to C-terminus: Protein GrpE (197 aa).

Residues 1-39 (MSSKEQKTPEGQAPEEIIMDQHEEIEAVEPEASAEQVDP) form a disordered region.

Belongs to the GrpE family. As to quaternary structure, homodimer.

Its subcellular location is the cytoplasm. Participates actively in the response to hyperosmotic and heat shock by preventing the aggregation of stress-denatured proteins, in association with DnaK and GrpE. It is the nucleotide exchange factor for DnaK and may function as a thermosensor. Unfolded proteins bind initially to DnaJ; upon interaction with the DnaJ-bound protein, DnaK hydrolyzes its bound ATP, resulting in the formation of a stable complex. GrpE releases ADP from DnaK; ATP binding to DnaK triggers the release of the substrate protein, thus completing the reaction cycle. Several rounds of ATP-dependent interactions between DnaJ, DnaK and GrpE are required for fully efficient folding. This chain is Protein GrpE, found in Escherichia coli O157:H7 (strain EC4115 / EHEC).